We begin with the raw amino-acid sequence, 380 residues long: Queuine tRNA-ribosyltransferase (380 aa).

Asp96 acts as the Proton acceptor in catalysis. Residues Asp96–Phe100, Asp150, Gln193, and Gly220 contribute to the substrate site. Residues Gly251–Ser257 are RNA binding. The active-site Nucleophile is Asp270. The segment at Thr275–Arg279 is RNA binding; important for wobble base 34 recognition. Zn(2+)-binding residues include Cys308, Cys310, Cys313, and His339.

This sequence belongs to the queuine tRNA-ribosyltransferase family. As to quaternary structure, homodimer. Within each dimer, one monomer is responsible for RNA recognition and catalysis, while the other monomer binds to the replacement base PreQ1. It depends on Zn(2+) as a cofactor.

The enzyme catalyses 7-aminomethyl-7-carbaguanine + guanosine(34) in tRNA = 7-aminomethyl-7-carbaguanosine(34) in tRNA + guanine. The protein operates within tRNA modification; tRNA-queuosine biosynthesis. Catalyzes the base-exchange of a guanine (G) residue with the queuine precursor 7-aminomethyl-7-deazaguanine (PreQ1) at position 34 (anticodon wobble position) in tRNAs with GU(N) anticodons (tRNA-Asp, -Asn, -His and -Tyr). Catalysis occurs through a double-displacement mechanism. The nucleophile active site attacks the C1' of nucleotide 34 to detach the guanine base from the RNA, forming a covalent enzyme-RNA intermediate. The proton acceptor active site deprotonates the incoming PreQ1, allowing a nucleophilic attack on the C1' of the ribose to form the product. After dissociation, two additional enzymatic reactions on the tRNA convert PreQ1 to queuine (Q), resulting in the hypermodified nucleoside queuosine (7-(((4,5-cis-dihydroxy-2-cyclopenten-1-yl)amino)methyl)-7-deazaguanosine). The chain is Queuine tRNA-ribosyltransferase from Streptococcus pyogenes serotype M49 (strain NZ131).